A 148-amino-acid chain; its full sequence is Urease accessory protein UreE (148 aa).

The protein belongs to the UreE family.

It is found in the cytoplasm. In terms of biological role, involved in urease metallocenter assembly. Binds nickel. Probably functions as a nickel donor during metallocenter assembly. The chain is Urease accessory protein UreE from Halalkalibacterium halodurans (strain ATCC BAA-125 / DSM 18197 / FERM 7344 / JCM 9153 / C-125) (Bacillus halodurans).